The sequence spans 1220 residues: DNA-directed RNA polymerase subunit beta (1220 aa).

The protein belongs to the RNA polymerase beta chain family. As to quaternary structure, the RNAP catalytic core consists of 2 alpha, 1 beta, 1 beta' and 1 omega subunit. When a sigma factor is associated with the core the holoenzyme is formed, which can initiate transcription.

It carries out the reaction RNA(n) + a ribonucleoside 5'-triphosphate = RNA(n+1) + diphosphate. Functionally, DNA-dependent RNA polymerase catalyzes the transcription of DNA into RNA using the four ribonucleoside triphosphates as substrates. The polypeptide is DNA-directed RNA polymerase subunit beta (Mesomycoplasma hyopneumoniae (strain 7448) (Mycoplasma hyopneumoniae)).